A 431-amino-acid chain; its full sequence is Serine--tRNA ligase (431 aa).

Residue 235–237 coordinates L-serine; sequence TSE. 266-268 contacts ATP; the sequence is RSE. L-serine is bound at residue E289. 353-356 provides a ligand contact to ATP; sequence EISS. S388 contacts L-serine.

The protein belongs to the class-II aminoacyl-tRNA synthetase family. Type-1 seryl-tRNA synthetase subfamily. Homodimer. The tRNA molecule binds across the dimer.

It localises to the cytoplasm. It catalyses the reaction tRNA(Ser) + L-serine + ATP = L-seryl-tRNA(Ser) + AMP + diphosphate + H(+). It carries out the reaction tRNA(Sec) + L-serine + ATP = L-seryl-tRNA(Sec) + AMP + diphosphate + H(+). It functions in the pathway aminoacyl-tRNA biosynthesis; selenocysteinyl-tRNA(Sec) biosynthesis; L-seryl-tRNA(Sec) from L-serine and tRNA(Sec): step 1/1. Functionally, catalyzes the attachment of serine to tRNA(Ser). Is also able to aminoacylate tRNA(Sec) with serine, to form the misacylated tRNA L-seryl-tRNA(Sec), which will be further converted into selenocysteinyl-tRNA(Sec). In Paraburkholderia phytofirmans (strain DSM 17436 / LMG 22146 / PsJN) (Burkholderia phytofirmans), this protein is Serine--tRNA ligase.